A 545-amino-acid chain; its full sequence is MSEFLRIAMAQFDFPVGAVAQNAERIIALIEQARDEHGADVVMFPELALSGYPPEDLLLRPGFLAHCQVAIERIAAATHGIVAVVGWPQSAGSVVYNVASVLCDGQVEQTYRKRELPNYAVFDERRYFEVDPNGSRCVFKVKGVPVGVLICEDLWFSEPLADTVCGGAELVLVPNASPYERGKHAQRDALLAERARETGAAIAYLNVVGGQDALVFDGASVVVDGHGRVHPAAAAFSDQWLVVDYMRSERRFVPLQWVVESEVSINALVWRAVVRGVQDYCRKNGFSKVWVGLSGGIDSALVLAIAVDALGADQVTAVRLPSRYTAELSNDLAAEQCHSLGVRLETVAIEPVFEGLLAALGPLFAGMAPDATEENLQSRSRGVILMALANKFGGLLLTTGNKSEYAVGYATIYGDMCGGYAPLKDIYKSQVFELAQWRNRVSDVLAIPPGVIHRPPSAELRAQQTDQDSLPPYEVLDGILSLYVDQEQSREDIIAAGYAAGVVDYVLNLVRINEWKRHQAAPGPKVSQRAFGRERRYPISNAYRG.

Residues 5-247 form the CN hydrolase domain; that stretch reads LRIAMAQFDF…DQWLVVDYMR (243 aa). The active-site Proton acceptor; for glutaminase activity is the E46. The active-site For glutaminase activity is the K113. Y119 provides a ligand contact to L-glutamine. C151 serves as the catalytic Nucleophile; for glutaminase activity. L-glutamine is bound by residues S177 and K183. Residues 269–545 form a ligase region; that stretch reads VWRAVVRGVQ…RYPISNAYRG (277 aa). 292-299 serves as a coordination point for ATP; sequence GLSGGIDS. Position 375 (N375) interacts with deamido-NAD(+). T399 is an ATP binding site. E404 and K516 together coordinate deamido-NAD(+).

In the C-terminal section; belongs to the NAD synthetase family.

It catalyses the reaction deamido-NAD(+) + L-glutamine + ATP + H2O = L-glutamate + AMP + diphosphate + NAD(+) + H(+). It participates in cofactor biosynthesis; NAD(+) biosynthesis; NAD(+) from deamido-NAD(+) (L-Gln route): step 1/1. Catalyzes the ATP-dependent amidation of deamido-NAD to form NAD. Uses L-glutamine as a nitrogen source. This chain is Glutamine-dependent NAD(+) synthetase, found in Xylella fastidiosa (strain Temecula1 / ATCC 700964).